Here is a 136-residue protein sequence, read N- to C-terminus: Holo-[acyl-carrier-protein] synthase (136 aa).

Asp-8 and Glu-57 together coordinate Mg(2+).

Belongs to the P-Pant transferase superfamily. AcpS family. Mg(2+) is required as a cofactor.

The protein localises to the cytoplasm. It carries out the reaction apo-[ACP] + CoA = holo-[ACP] + adenosine 3',5'-bisphosphate + H(+). Functionally, transfers the 4'-phosphopantetheine moiety from coenzyme A to a Ser of acyl-carrier-protein. The sequence is that of Holo-[acyl-carrier-protein] synthase from Azorhizobium caulinodans (strain ATCC 43989 / DSM 5975 / JCM 20966 / LMG 6465 / NBRC 14845 / NCIMB 13405 / ORS 571).